Reading from the N-terminus, the 202-residue chain is Small ribosomal subunit protein uS4 (202 aa).

The region spanning 91–154 (SMLSSVLYNS…VNLPSVLAAI (64 aa)) is the S4 RNA-binding domain.

Belongs to the universal ribosomal protein uS4 family. In terms of assembly, part of the 30S ribosomal subunit. Contacts protein S5. The interaction surface between S4 and S5 is involved in control of translational fidelity.

Its function is as follows. One of the primary rRNA binding proteins, it binds directly to 16S rRNA where it nucleates assembly of the body of the 30S subunit. In terms of biological role, with S5 and S12 plays an important role in translational accuracy. This Ehrlichia ruminantium (strain Gardel) protein is Small ribosomal subunit protein uS4.